Reading from the N-terminus, the 475-residue chain is tRNA-2-methylthio-N(6)-dimethylallyladenosine synthase (475 aa).

Positions 2 to 119 (AKLHITTWGC…LPEMINQIRS (118 aa)) constitute an MTTase N-terminal domain. Positions 11, 48, 82, 156, 160, and 163 each coordinate [4Fe-4S] cluster. Residues 142–374 (KAEGPTAFVS…QQRINHQAMQ (233 aa)) enclose the Radical SAM core domain. In terms of domain architecture, TRAM spans 377 to 440 (RLMLGTEQRI…SNSLRGEVIR (64 aa)).

This sequence belongs to the methylthiotransferase family. MiaB subfamily. In terms of assembly, monomer. The cofactor is [4Fe-4S] cluster.

The protein resides in the cytoplasm. The enzyme catalyses N(6)-dimethylallyladenosine(37) in tRNA + (sulfur carrier)-SH + AH2 + 2 S-adenosyl-L-methionine = 2-methylsulfanyl-N(6)-dimethylallyladenosine(37) in tRNA + (sulfur carrier)-H + 5'-deoxyadenosine + L-methionine + A + S-adenosyl-L-homocysteine + 2 H(+). Catalyzes the methylthiolation of N6-(dimethylallyl)adenosine (i(6)A), leading to the formation of 2-methylthio-N6-(dimethylallyl)adenosine (ms(2)i(6)A) at position 37 in tRNAs that read codons beginning with uridine. The chain is tRNA-2-methylthio-N(6)-dimethylallyladenosine synthase from Haemophilus ducreyi (strain 35000HP / ATCC 700724).